Here is a 95-residue protein sequence, read N- to C-terminus: Large ribosomal subunit protein uL23 (95 aa).

This sequence belongs to the universal ribosomal protein uL23 family. In terms of assembly, part of the 50S ribosomal subunit. Contacts protein L29, and trigger factor when it is bound to the ribosome.

One of the early assembly proteins it binds 23S rRNA. One of the proteins that surrounds the polypeptide exit tunnel on the outside of the ribosome. Forms the main docking site for trigger factor binding to the ribosome. The chain is Large ribosomal subunit protein uL23 from Bacillus pumilus (strain SAFR-032).